The following is a 165-amino-acid chain: 2-C-methyl-D-erythritol 2,4-cyclodiphosphate synthase (165 aa).

A divalent metal cation-binding residues include D8 and H10. Residues 8-10 and 34-35 contribute to the 4-CDP-2-C-methyl-D-erythritol 2-phosphate site; these read DVH and HS. Position 42 (H42) interacts with a divalent metal cation. Residues 56–58, 61–65, 100–106, 132–135, F139, and R142 contribute to the 4-CDP-2-C-methyl-D-erythritol 2-phosphate site; these read DIG, FPDTD, AQAPKMA, and TTTE.

It belongs to the IspF family. In terms of assembly, homotrimer. It depends on a divalent metal cation as a cofactor.

It catalyses the reaction 4-CDP-2-C-methyl-D-erythritol 2-phosphate = 2-C-methyl-D-erythritol 2,4-cyclic diphosphate + CMP. It participates in isoprenoid biosynthesis; isopentenyl diphosphate biosynthesis via DXP pathway; isopentenyl diphosphate from 1-deoxy-D-xylulose 5-phosphate: step 4/6. Involved in the biosynthesis of isopentenyl diphosphate (IPP) and dimethylallyl diphosphate (DMAPP), two major building blocks of isoprenoid compounds. Catalyzes the conversion of 4-diphosphocytidyl-2-C-methyl-D-erythritol 2-phosphate (CDP-ME2P) to 2-C-methyl-D-erythritol 2,4-cyclodiphosphate (ME-CPP) with a corresponding release of cytidine 5-monophosphate (CMP). In Pectobacterium atrosepticum (strain SCRI 1043 / ATCC BAA-672) (Erwinia carotovora subsp. atroseptica), this protein is 2-C-methyl-D-erythritol 2,4-cyclodiphosphate synthase.